A 268-amino-acid polypeptide reads, in one-letter code: Thiazole synthase (268 aa).

Residue K108 is the Schiff-base intermediate with DXP of the active site. 1-deoxy-D-xylulose 5-phosphate is bound by residues G169, 195–196, and 217–218; these read AG and NS. Residues 248–268 are disordered; sequence RLKENPLASPSSPLDGVISNN. Polar residues predominate over residues 255–268; the sequence is ASPSSPLDGVISNN.

This sequence belongs to the ThiG family. In terms of assembly, homotetramer. Forms heterodimers with either ThiH or ThiS.

The protein localises to the cytoplasm. It catalyses the reaction [ThiS sulfur-carrier protein]-C-terminal-Gly-aminoethanethioate + 2-iminoacetate + 1-deoxy-D-xylulose 5-phosphate = [ThiS sulfur-carrier protein]-C-terminal Gly-Gly + 2-[(2R,5Z)-2-carboxy-4-methylthiazol-5(2H)-ylidene]ethyl phosphate + 2 H2O + H(+). It functions in the pathway cofactor biosynthesis; thiamine diphosphate biosynthesis. Catalyzes the rearrangement of 1-deoxy-D-xylulose 5-phosphate (DXP) to produce the thiazole phosphate moiety of thiamine. Sulfur is provided by the thiocarboxylate moiety of the carrier protein ThiS. In vitro, sulfur can be provided by H(2)S. The chain is Thiazole synthase from Prochlorococcus marinus (strain NATL2A).